The chain runs to 637 residues: MRSFLLASLASVATLKSAQAHPAHSTRGLSKRGIDLDSYRLKQPVSYTNANDVGSDASISSLTRRATAEETASELVKKVVPGATFRVADNYVGSNGVAHVYFKQTANGLDVDNGDFNVNVGRDGTVFSFGNSFYTGDIPTAPSKSKRDTIEPAAAFKSAVSVLDLPVSAGSATSEPKEAENTFAIKQSEGTVSEPEARLVYVQTNGKLALTWRVETDVLSNWLLTYVDAIDGSQVHAVVDYSADASYQVYPWGINDPTEGERTIVVDPFDKQASEFGWHSDGSKTYDTTRGNNGVAQNNWANKSASEYLNLPRPVSTDLKFHYPYSLNETDFQKYSNASVTQLFYTSNVYHDLLHKLGFNEQAGNFEINNNGAGGAGNDFVFLNAQDGSDFNNANFATPPDGQAARMRMYMWNGTTPFRDCSFDASVIIHEYTHGLSNRLTGGPANSNCLNVLESGGMGEGWSDFYAIATHLKAGDTRETDYPMAPWVSGKPNGIRNYLYSTDINVNPQTYIYVDPQTRVHPIGNIWAGMLYEVLWNLIDKHGKNDAGTPDFDSNGLPTDGKYLAMKIVMEGMALQPCNPNFVSARDAIVDADKILTGGDNKCEIWKGFAKRGLGKDAKYDRVARTESYDLPEGVCA.

Positions 1–20 (MRSFLLASLASVATLKSAQA) are cleaved as a signal peptide. Positions 21 to 244 (HPAHSTRGLS…VHAVVDYSAD (224 aa)) are excised as a propeptide. 4 N-linked (GlcNAc...) asparagine glycosylation sites follow: Asn-302, Asn-328, Asn-337, and Asn-413. His-430 contacts Zn(2+). The active site involves Glu-431. His-434 contacts Zn(2+).

Belongs to the peptidase M36 family. Requires Zn(2+) as cofactor.

It is found in the secreted. In terms of biological role, secreted metalloproteinase that allows assimilation of proteinaceous substrates. The chain is Extracellular metalloproteinase 2 (MEP2) from Phaeosphaeria nodorum (strain SN15 / ATCC MYA-4574 / FGSC 10173) (Glume blotch fungus).